The chain runs to 347 residues: 4-hydroxy-3-methylbut-2-en-1-yl diphosphate synthase (flavodoxin) (347 aa).

[4Fe-4S] cluster-binding residues include cysteine 259, cysteine 262, cysteine 294, and glutamate 301.

The protein belongs to the IspG family. The cofactor is [4Fe-4S] cluster.

The enzyme catalyses (2E)-4-hydroxy-3-methylbut-2-enyl diphosphate + oxidized [flavodoxin] + H2O + 2 H(+) = 2-C-methyl-D-erythritol 2,4-cyclic diphosphate + reduced [flavodoxin]. The protein operates within isoprenoid biosynthesis; isopentenyl diphosphate biosynthesis via DXP pathway; isopentenyl diphosphate from 1-deoxy-D-xylulose 5-phosphate: step 5/6. Its function is as follows. Converts 2C-methyl-D-erythritol 2,4-cyclodiphosphate (ME-2,4cPP) into 1-hydroxy-2-methyl-2-(E)-butenyl 4-diphosphate. The sequence is that of 4-hydroxy-3-methylbut-2-en-1-yl diphosphate synthase (flavodoxin) from Caldicellulosiruptor saccharolyticus (strain ATCC 43494 / DSM 8903 / Tp8T 6331).